Reading from the N-terminus, the 380-residue chain is Cobalt-precorrin-5B C(1)-methyltransferase (380 aa).

Belongs to the CbiD family.

The catalysed reaction is Co-precorrin-5B + S-adenosyl-L-methionine = Co-precorrin-6A + S-adenosyl-L-homocysteine. It functions in the pathway cofactor biosynthesis; adenosylcobalamin biosynthesis; cob(II)yrinate a,c-diamide from sirohydrochlorin (anaerobic route): step 6/10. Catalyzes the methylation of C-1 in cobalt-precorrin-5B to form cobalt-precorrin-6A. The protein is Cobalt-precorrin-5B C(1)-methyltransferase of Salinispora arenicola (strain CNS-205).